The primary structure comprises 1434 residues: Probable ATP-dependent RNA helicase spindle-E (1434 aa).

Positions 125–292 (LAAINAHPVV…FTTTNSIPPV (168 aa)) constitute a Helicase ATP-binding domain. 138–145 (GETGCGKT) contributes to the ATP binding site. Positions 238–241 (DEVH) match the DEAH box motif. Residues 354–526 (QSRQSYDEAL…NSVLKAKVLN (173 aa)) form the Helicase C-terminal domain. Residues 938-1001 (ASAIAKGMMV…RLMPRELTEQ (64 aa)) enclose the Tudor domain.

The protein belongs to the DEAD box helicase family. DEAH subfamily.

Its subcellular location is the cytoplasm. The protein resides in the perinuclear region. It localises to the cytoplasmic ribonucleoprotein granule. It carries out the reaction ATP + H2O = ADP + phosphate + H(+). Probable ATP-binding RNA helicase which plays a central role during spermatogenesis and oogenesis by repressing transposable elements and preventing their mobilization, which is essential for the germline integrity. Acts via the piRNA metabolic process, which mediates the repression of transposable elements during meiosis by forming complexes composed of piRNAs and Piwi and govern the methylation and subsequent repression of transposons. Involved in the repression of LTR retrotransposon copia. Also involved in telomere regulation by repressing specialized telomeric retroelements HeT-A, TAHRE, and TART; Drosophila telomeres being maintained by transposition of specialized telomeric retroelements. Involved in telomeric trans-silencing, a repression mechanism by which a transposon or a transgene inserted in subtelomeric heterochromatin has the capacity to repress in trans in the female germline, a homologous transposon, or transgene located in euchromatin. Involved in the repression of testis-expressed Stellate genes by the homologous Su(Ste) repeats. Required for anteroposterior and dorsoventral axis formation during oogenesis. Key component of the perinuclear meiotic nuage, an electron dense structure involved in the post-transcriptional regulation of transposons and mRNAs; required for recruitment of other nuage comonents including vas, krimp, aub and mael. May have a role in production of piwi-interacting RNA (piRNA). The sequence is that of Probable ATP-dependent RNA helicase spindle-E from Drosophila melanogaster (Fruit fly).